Here is a 511-residue protein sequence, read N- to C-terminus: Cytochrome P450 monooxygenase roqR (511 aa).

The first 23 residues, 1-23, serve as a signal peptide directing secretion; the sequence is MSGYVLLTVQLAAVLLLVTLWRA. Asn364, Asn373, and Asn383 each carry an N-linked (GlcNAc...) asparagine glycan. Residue Cys455 coordinates heme.

It belongs to the cytochrome P450 family. Heme is required as a cofactor.

It participates in alkaloid biosynthesis. In terms of biological role, cytochrome P450 monooxygenase; part of the gene cluster that mediates the biosynthesis of the mycotoxins roquefortine C and meleagrin. The first stage is catalyzed by the dipeptide synthase roqA which condenses histidine and tryptophan to produce histidyltryptophanyldiketopiperazine (HTD). HTD is then converted to roquefortine C through two possible pathways. In the first pathway, prenyltransferase roqD transforms HTD to the intermediate roquefortine D, which is in turn converted to roquefortine C by the cytochrome P450 monooxygenase roqR. In the second pathway, HTD is first converted to the intermediate dehydrohistidyltryptophanyldi-ketopiperazine (DHTD) by roqR which is then prenylated by roqD to form roquefortine C. Roquefortine C can be further transformed to meleagrin via three more reactions including oxydation to glandicolin A by roqM, which is further reduced to glandicoline B by roqO. Finally, glandicoline B is converted to meleagrin by the glandicoline B O-methyltransferase roqN. More studies identified further branching and additional metabolites produced by the roquefortine/meleagrin cluster, including roquefortine F, roquefortine L, roquefortine M, roquefortine N and neoxaline. The polypeptide is Cytochrome P450 monooxygenase roqR (Penicillium rubens (strain ATCC 28089 / DSM 1075 / NRRL 1951 / Wisconsin 54-1255) (Penicillium chrysogenum)).